A 235-amino-acid polypeptide reads, in one-letter code: Sperm annulus positionning complex subunit Chibby3 (235 aa).

The interval 1–41 (MADSKMKWGQAWDSSLGTATTSSSSATGSPSPFQNIRVPDT) is disordered. Positions 14 to 32 (SSLGTATTSSSSATGSPSP) are enriched in low complexity. Residues 167 to 181 (LLEENNYLKLQQELL) form a leucine-zipper; mediates homodimerization region.

Belongs to the chibby family. Homodimer. Interacts with CIBAR1 (via BAR-like domain); both proteins form a ninefold symmetric structure at the flagellar base; are recruited to the annulus in a mutually dependent manner and regulate annulus positionning. Testis-specific.

It is found in the cell projection. The protein resides in the cilium. The protein localises to the flagellum. In terms of biological role, plays a key role in the correct positioning of the annulus, a septin-based ring strucure in the sperm flagellum, serving both as a physical barrier and a membrane diffusion barrier that separates the midpiece (MP) from the principal piece (PP). This positioning is essential for proper sperm motility and function. Interacts with CIBAR1 to form a complex which localizes to the curved membrane region of the flagellar pocket. By doing so, may provide stability and rigidity to the periannular membrane to prevent membrane deformation. This function is crucial for halting annulus migration at the proximal end of the fibrous sheath-containing PP. This is Sperm annulus positionning complex subunit Chibby3 (Cby3) from Mus musculus (Mouse).